Consider the following 573-residue polypeptide: Probable D-xylulose kinase A (573 aa).

Residues histidine 97, arginine 168, aspartate 284, and asparagine 285 each contribute to the substrate site. ATP-binding positions include tryptophan 366, 471–472 (GG), and asparagine 475.

It belongs to the FGGY kinase family.

It is found in the cytoplasm. It catalyses the reaction D-xylulose + ATP = D-xylulose 5-phosphate + ADP + H(+). Functionally, highly specific D-xylulose kinase which participates in the catabolism of xylose. Xylose is a major component of hemicelluloses such as xylan. Most fungi utilize D-xylose via three enzymatic reactions, xylose reductase (XR), xylitol dehydrogenase (XDH), and xylulokinase, to form xylulose 5-phosphate, which enters pentose phosphate pathway. The polypeptide is Probable D-xylulose kinase A (xkiA) (Aspergillus clavatus (strain ATCC 1007 / CBS 513.65 / DSM 816 / NCTC 3887 / NRRL 1 / QM 1276 / 107)).